Here is a 311-residue protein sequence, read N- to C-terminus: Olfactory receptor 5L2 (311 aa).

Over 1-25 the chain is Extracellular; the sequence is MGKENCTTVAEFILLGLSDVPELRV. N-linked (GlcNAc...) asparagine glycosylation is present at Asn5. The helical transmembrane segment at 26 to 46 threads the bilayer; it reads CLFLLFLLIYGVTLLANLGMT. The Cytoplasmic segment spans residues 47-54; the sequence is ALIQVSSR. The chain crosses the membrane as a helical span at residues 55–75; the sequence is LHTPVYFFLSHLSFVDFCYSS. The Extracellular segment spans residues 76 to 99; that stretch reads IIVPKMLANIFNKDKAISFLGCMV. The cysteines at positions 97 and 189 are disulfide-linked. A helical transmembrane segment spans residues 100–120; sequence QFYLFCTCGVTEVFLLAVMAY. Residues 121 to 139 are Cytoplasmic-facing; that stretch reads DRFVAICNPLLYMVTMSQK. The helical transmembrane segment at 140-160 threads the bilayer; that stretch reads LRVELTSCCYFCGTVCSLIHS. Topologically, residues 161-196 are extracellular; that stretch reads SLALRILFYRSNVINHFFCDLPPLLSLACSDVTVNE. A glycan (N-linked (GlcNAc...) asparagine) is linked at Asn195. Residues 197–217 traverse the membrane as a helical segment; sequence TLLFLVATLNESVTIMIILTS. Over 218–237 the chain is Cytoplasmic; sequence YLLILTTILKIHSAESRHKA. The chain crosses the membrane as a helical span at residues 238 to 258; that stretch reads FSTCASHLTAITVSHGTILYI. The Extracellular segment spans residues 259–271; the sequence is YCRPSSGNSGDVD. Residues 272 to 292 traverse the membrane as a helical segment; sequence KVATVFYTVVIPMLNPLIYSL. Topologically, residues 293–311 are cytoplasmic; it reads RNKDVNKALRKVMGSKIHS.

The protein belongs to the G-protein coupled receptor 1 family.

The protein resides in the cell membrane. Functionally, odorant receptor. The chain is Olfactory receptor 5L2 (OR5L2) from Homo sapiens (Human).